We begin with the raw amino-acid sequence, 471 residues long: Tryptophanase (471 aa).

Lys-5, Lys-115, and Lys-156 each carry N6-acetyllysine. Lys-270 is modified (N6-(pyridoxal phosphate)lysine). Lys-450 is subject to N6-acetyllysine.

The protein belongs to the beta-eliminating lyase family. In terms of assembly, homotetramer. It depends on pyridoxal 5'-phosphate as a cofactor.

It carries out the reaction L-tryptophan + H2O = indole + pyruvate + NH4(+). It functions in the pathway amino-acid degradation; L-tryptophan degradation via pyruvate pathway; indole and pyruvate from L-tryptophan: step 1/1. In Shigella boydii serotype 18 (strain CDC 3083-94 / BS512), this protein is Tryptophanase.